A 466-amino-acid chain; its full sequence is Soluble pyridine nucleotide transhydrogenase (466 aa).

36-45 (ERYQNVGGGC) provides a ligand contact to FAD.

Belongs to the class-I pyridine nucleotide-disulfide oxidoreductase family. In terms of assembly, homooligomer; probable homooctamer. FAD serves as cofactor.

It localises to the cytoplasm. The enzyme catalyses NAD(+) + NADPH = NADH + NADP(+). Its function is as follows. Conversion of NADPH, generated by peripheral catabolic pathways, to NADH, which can enter the respiratory chain for energy generation. This chain is Soluble pyridine nucleotide transhydrogenase, found in Escherichia coli O6:H1 (strain CFT073 / ATCC 700928 / UPEC).